A 176-amino-acid chain; its full sequence is Cytochrome c oxidase subunit 4 isoform 2, mitochondrial (176 aa).

The N-terminal 28 residues, 1-28 (MLRLTAGRVRSLLAGRATAAFSTSSARM), are a transit peptide targeting the mitochondrion. The Mitochondrial matrix segment spans residues 29 to 106 (ASHDLEVAES…TYSEMKQPSS (78 aa)). The chain crosses the membrane as a helical span at residues 107 to 132 (EWKTVFGGIFIFLGFTGLVVWWQALY). The Mitochondrial intermembrane segment spans residues 133 to 176 (VYPPRPRTFDDEWKAKQLKRMLDMRVNPIEGFSAKWDYEKGQWK).

Belongs to the cytochrome c oxidase IV family. Component of the cytochrome c oxidase (complex IV, CIV), a multisubunit enzyme composed of 14 subunits. The complex is composed of a catalytic core of 3 subunits MT-CO1, MT-CO2 and MT-CO3, encoded in the mitochondrial DNA, and 11 supernumerary subunits COX4I, COX5A, COX5B, COX6A, COX6B, COX6C, COX7A, COX7B, COX7C, COX8 and NDUFA4, which are encoded in the nuclear genome. The complex exists as a monomer or a dimer and forms supercomplexes (SCs) in the inner mitochondrial membrane with NADH-ubiquinone oxidoreductase (complex I, CI) and ubiquinol-cytochrome c oxidoreductase (cytochrome b-c1 complex, complex III, CIII), resulting in different assemblies (supercomplex SCI(1)III(2)IV(1) and megacomplex MCI(2)III(2)IV(2)).

Its subcellular location is the mitochondrion inner membrane. Its pathway is energy metabolism; oxidative phosphorylation. Functionally, component of the cytochrome c oxidase, the last enzyme in the mitochondrial electron transport chain which drives oxidative phosphorylation. The respiratory chain contains 3 multisubunit complexes succinate dehydrogenase (complex II, CII), ubiquinol-cytochrome c oxidoreductase (cytochrome b-c1 complex, complex III, CIII) and cytochrome c oxidase (complex IV, CIV), that cooperate to transfer electrons derived from NADH and succinate to molecular oxygen, creating an electrochemical gradient over the inner membrane that drives transmembrane transport and the ATP synthase. Cytochrome c oxidase is the component of the respiratory chain that catalyzes the reduction of oxygen to water. Electrons originating from reduced cytochrome c in the intermembrane space (IMS) are transferred via the dinuclear copper A center (CU(A)) of subunit 2 and heme A of subunit 1 to the active site in subunit 1, a binuclear center (BNC) formed by heme A3 and copper B (CU(B)). The BNC reduces molecular oxygen to 2 water molecules using 4 electrons from cytochrome c in the IMS and 4 protons from the mitochondrial matrix. The sequence is that of Cytochrome c oxidase subunit 4 isoform 2, mitochondrial from Thunnus obesus (Bigeye tuna).